The sequence spans 446 residues: Phosphoglucosamine mutase (446 aa).

S100 serves as the catalytic Phosphoserine intermediate. Mg(2+) contacts are provided by S100, D239, D241, and D243. Phosphoserine is present on S100.

It belongs to the phosphohexose mutase family. Requires Mg(2+) as cofactor. In terms of processing, activated by phosphorylation.

It catalyses the reaction alpha-D-glucosamine 1-phosphate = D-glucosamine 6-phosphate. In terms of biological role, catalyzes the conversion of glucosamine-6-phosphate to glucosamine-1-phosphate. This Shouchella clausii (strain KSM-K16) (Alkalihalobacillus clausii) protein is Phosphoglucosamine mutase.